Reading from the N-terminus, the 151-residue chain is Large ribosomal subunit protein uL15 (151 aa).

Residues 1 to 62 (MVKLNELFPK…GGQMPLYRRV (62 aa)) form a disordered region. Residues 11–20 (HGSRKAKRRI) are compositionally biased toward basic residues.

The protein belongs to the universal ribosomal protein uL15 family. Part of the 50S ribosomal subunit.

Binds to the 23S rRNA. This is Large ribosomal subunit protein uL15 from Elusimicrobium minutum (strain Pei191).